Consider the following 296-residue polypeptide: Cytidine deaminase (296 aa).

2 CMP/dCMP-type deaminase domains span residues 47–167 (TEAE…FGPK) and 186–296 (DSAD…IDPV). 88–90 (NLE) contributes to the substrate binding site. Histidine 101 is a binding site for Zn(2+). Glutamate 103 (proton donor) is an active-site residue. Zn(2+) is bound by residues cysteine 128 and cysteine 131.

It belongs to the cytidine and deoxycytidylate deaminase family. In terms of assembly, homodimer. Zn(2+) serves as cofactor.

The catalysed reaction is cytidine + H2O + H(+) = uridine + NH4(+). The enzyme catalyses 2'-deoxycytidine + H2O + H(+) = 2'-deoxyuridine + NH4(+). Its function is as follows. This enzyme scavenges exogenous and endogenous cytidine and 2'-deoxycytidine for UMP synthesis. This chain is Cytidine deaminase, found in Shewanella baltica (strain OS155 / ATCC BAA-1091).